Consider the following 367-residue polypeptide: Apurinic-apyrimidinic endonuclease 1 (367 aa).

Histidine 83, histidine 123, glutamate 158, aspartate 192, histidine 195, histidine 229, aspartate 242, histidine 244, and glutamate 274 together coordinate Zn(2+). The tract at residues aspartate 312–glutamate 367 is disordered. Positions serine 321 to lysine 332 are enriched in basic and acidic residues. The span at glutamine 333–lysine 344 shows a compositional bias: basic residues. The residue at position 356 (serine 356) is a Phosphoserine.

This sequence belongs to the AP endonuclease 2 family. As to quaternary structure, monomer. Requires Zn(2+) as cofactor.

The protein localises to the nucleus. In terms of biological role, DNA repair enzyme that cleaves apurinic/apyrimidinic (AP) sites and removes 3'-blocking groups present at single strand breaks of damaged DNA. APN1 accounts for &gt; 97% of both apurinic/apyrimidinic (AP) endonuclease and DNA 3'-repair diesterase activities. The protein is Apurinic-apyrimidinic endonuclease 1 (APN1) of Saccharomyces cerevisiae (strain ATCC 204508 / S288c) (Baker's yeast).